Consider the following 198-residue polypeptide: tRNA (cytidine(56)-2'-O)-methyltransferase (198 aa).

S-adenosyl-L-methionine contacts are provided by residues leucine 81, 110 to 114 (GAEKV), and 128 to 135 (IGNQPHSE). The interval 178-198 (DAKQAEASGEGASRKNGQLPS) is disordered.

The protein belongs to the aTrm56 family. In terms of assembly, homodimer.

It localises to the cytoplasm. The catalysed reaction is cytidine(56) in tRNA + S-adenosyl-L-methionine = 2'-O-methylcytidine(56) in tRNA + S-adenosyl-L-homocysteine + H(+). Its function is as follows. Specifically catalyzes the AdoMet-dependent 2'-O-ribose methylation of cytidine at position 56 in tRNAs. The chain is tRNA (cytidine(56)-2'-O)-methyltransferase from Pyrococcus abyssi (strain GE5 / Orsay).